The primary structure comprises 261 residues: Undecaprenyl-diphosphatase (261 aa).

A run of 8 helical transmembrane segments spans residues 9 to 31 (ALLLGVVEGLTEFLPVSSTGHLT), 46 to 66 (FLKTFLVAIQLGAILAVLLLY), 80 to 100 (IAVAFVPTGVIGFLFYPLIKG), 102 to 122 (ILGNDAVVAFFLFFVGAVLLF), 137 to 157 (ALPLARVAWIGVFQGLAALFP), 180 to 200 (AEFSFLLALPTMFAAVGYDLW), 209 to 229 (GGWSLLLLGFLAALVTALVTV), and 240 to 260 (GFRPFALYRMALAAVYAFFFL).

It belongs to the UppP family.

The protein resides in the cell inner membrane. The enzyme catalyses di-trans,octa-cis-undecaprenyl diphosphate + H2O = di-trans,octa-cis-undecaprenyl phosphate + phosphate + H(+). In terms of biological role, catalyzes the dephosphorylation of undecaprenyl diphosphate (UPP). Confers resistance to bacitracin. This Thermus thermophilus (strain ATCC 27634 / DSM 579 / HB8) protein is Undecaprenyl-diphosphatase.